The sequence spans 201 residues: Adenylyl-sulfate kinase (201 aa).

35-42 (GLSGSGKS) is an ATP binding site. Serine 109 functions as the Phosphoserine intermediate in the catalytic mechanism.

This sequence belongs to the APS kinase family.

It carries out the reaction adenosine 5'-phosphosulfate + ATP = 3'-phosphoadenylyl sulfate + ADP + H(+). It participates in sulfur metabolism; hydrogen sulfide biosynthesis; sulfite from sulfate: step 2/3. Functionally, catalyzes the synthesis of activated sulfate. This is Adenylyl-sulfate kinase from Klebsiella pneumoniae (strain 342).